Consider the following 71-residue polypeptide: uncharacterized protein (71 aa).

Residues 2 to 24 (IIAIVAVVIFLLNFLTPYGYMPM) traverse the membrane as a helical segment. Residues 48–71 (PAESSSNGGSMITKPSTGACQGGR) form a disordered region. A compositionally biased stretch (polar residues) spans 49 to 71 (AESSSNGGSMITKPSTGACQGGR).

It localises to the membrane. This is an uncharacterized protein from Archaeoglobus fulgidus (strain ATCC 49558 / DSM 4304 / JCM 9628 / NBRC 100126 / VC-16).